A 472-amino-acid chain; its full sequence is Siroheme synthase (472 aa).

Residues 1–207 (MNFLPIFLDI…GKDQAAKAWL (207 aa)) form a precorrin-2 dehydrogenase /sirohydrochlorin ferrochelatase region. NAD(+) contacts are provided by residues 22-23 (EV) and 43-44 (PR). At Ser132 the chain carries Phosphoserine. Residues 221–472 (GEVYLVGAGP…QPEGNLPGAE (252 aa)) form a uroporphyrinogen-III C-methyltransferase region. Pro230 contacts S-adenosyl-L-methionine. Residue Asp253 is the Proton acceptor of the active site. Lys275 (proton donor) is an active-site residue. Residues 306–308 (GGD), Ile311, 336–337 (TA), Met388, and Gly417 each bind S-adenosyl-L-methionine.

It in the N-terminal section; belongs to the precorrin-2 dehydrogenase / sirohydrochlorin ferrochelatase family. This sequence in the C-terminal section; belongs to the precorrin methyltransferase family.

It carries out the reaction uroporphyrinogen III + 2 S-adenosyl-L-methionine = precorrin-2 + 2 S-adenosyl-L-homocysteine + H(+). The enzyme catalyses precorrin-2 + NAD(+) = sirohydrochlorin + NADH + 2 H(+). The catalysed reaction is siroheme + 2 H(+) = sirohydrochlorin + Fe(2+). It participates in cofactor biosynthesis; adenosylcobalamin biosynthesis; precorrin-2 from uroporphyrinogen III: step 1/1. It functions in the pathway cofactor biosynthesis; adenosylcobalamin biosynthesis; sirohydrochlorin from precorrin-2: step 1/1. Its pathway is porphyrin-containing compound metabolism; siroheme biosynthesis; precorrin-2 from uroporphyrinogen III: step 1/1. The protein operates within porphyrin-containing compound metabolism; siroheme biosynthesis; siroheme from sirohydrochlorin: step 1/1. It participates in porphyrin-containing compound metabolism; siroheme biosynthesis; sirohydrochlorin from precorrin-2: step 1/1. Multifunctional enzyme that catalyzes the SAM-dependent methylations of uroporphyrinogen III at position C-2 and C-7 to form precorrin-2 via precorrin-1. Then it catalyzes the NAD-dependent ring dehydrogenation of precorrin-2 to yield sirohydrochlorin. Finally, it catalyzes the ferrochelation of sirohydrochlorin to yield siroheme. The polypeptide is Siroheme synthase (Nitrosospira multiformis (strain ATCC 25196 / NCIMB 11849 / C 71)).